The following is a 119-amino-acid chain: Large ribosomal subunit protein bL20 (119 aa).

It belongs to the bacterial ribosomal protein bL20 family.

In terms of biological role, binds directly to 23S ribosomal RNA and is necessary for the in vitro assembly process of the 50S ribosomal subunit. It is not involved in the protein synthesizing functions of that subunit. The chain is Large ribosomal subunit protein bL20 from Xylella fastidiosa (strain M23).